The primary structure comprises 779 residues: Chloride channel protein CLC-c (779 aa).

Position 27 is a phosphoserine (Ser-27). 12 helical membrane-spanning segments follow: residues 92–112 (TFLK…VGFL), 142–162 (FAFA…CAFI), 190–210 (STLF…FVVG), 215–235 (MVHT…KKYR), 257–277 (GAAA…LFAL), 287–307 (ALLW…RSLI), 341–361 (LAIV…NYLV), 380–400 (IMLV…LPWL), 466–486 (LAIF…IAIP), 488–508 (GLFI…GRLL), 520–540 (SLLG…SLCV), and 541–561 (ILLE…VLLI). In terms of domain architecture, CBS 1 spans 601-659 (DVVSGALISFSRVEKVGVIWQALKMTRHNGFPVIDEPPFTEASELCGIALRSHLLVLLQ). Ser-672 is modified (phosphoserine). The 65-residue stretch at 713-777 (ITNTSPYTVL…VLGLYPHIDP (65 aa)) folds into the CBS 2 domain. A helical membrane pass occupies residues 741 to 761 (HLCVVPKTPGRPPIVGILTRH).

The protein belongs to the chloride channel (TC 2.A.49) family. In terms of assembly, homodimer. Interacts with PP2A5. As to expression, broadly expressed in the plant.

It is found in the membrane. In terms of biological role, voltage-gated chloride channel. The polypeptide is Chloride channel protein CLC-c (CLC-C) (Arabidopsis thaliana (Mouse-ear cress)).